The chain runs to 241 residues: Carboxy-S-adenosyl-L-methionine synthase 1 (241 aa).

S-adenosyl-L-methionine-binding positions include tyrosine 37, 61–63, asparagine 131, and arginine 198; that span reads GCS.

This sequence belongs to the class I-like SAM-binding methyltransferase superfamily. Cx-SAM synthase family. As to quaternary structure, homodimer.

It catalyses the reaction prephenate + S-adenosyl-L-methionine = carboxy-S-adenosyl-L-methionine + 3-phenylpyruvate + H2O. Functionally, catalyzes the conversion of S-adenosyl-L-methionine (SAM) to carboxy-S-adenosyl-L-methionine (Cx-SAM). This chain is Carboxy-S-adenosyl-L-methionine synthase 1, found in Yersinia pseudotuberculosis serotype IB (strain PB1/+).